The chain runs to 209 residues: Ribosomal RNA large subunit methyltransferase E (209 aa).

Residues Gly63, Trp65, Asp83, Asp99, and Asp124 each coordinate S-adenosyl-L-methionine. Lys164 serves as the catalytic Proton acceptor. In terms of domain architecture, TRAM spans 191–209 (EASRGRSREVYIVATGYKG).

This sequence belongs to the class I-like SAM-binding methyltransferase superfamily. RNA methyltransferase RlmE family.

It is found in the cytoplasm. It catalyses the reaction uridine(2552) in 23S rRNA + S-adenosyl-L-methionine = 2'-O-methyluridine(2552) in 23S rRNA + S-adenosyl-L-homocysteine + H(+). Specifically methylates the uridine in position 2552 of 23S rRNA at the 2'-O position of the ribose in the fully assembled 50S ribosomal subunit. The chain is Ribosomal RNA large subunit methyltransferase E from Haemophilus influenzae (strain 86-028NP).